A 147-amino-acid polypeptide reads, in one-letter code: uncharacterized protein (147 aa).

This is an uncharacterized protein from Bacillus subtilis (strain 168).